Here is a 264-residue protein sequence, read N- to C-terminus: 2',3'-cyclic-nucleotide 2'-phosphodiesterase (264 aa).

Fe cation is bound by residues D8, E39, N40, and N67. H68 (proton donor) is an active-site residue. Residues H150, H175, and H177 each coordinate Fe cation.

This sequence belongs to the YmdB-like family. As to quaternary structure, homodimer. The cofactor is Fe(2+). Fe(3+) serves as cofactor.

It is found in the cytoplasm. It carries out the reaction a nucleoside 2',3'-cyclic phosphate + H2O = a nucleoside 3'-phosphate + H(+). Its function is as follows. Plays a central, regulatory role in the late adaptive responses and affects the levels of many genes. May act via regulation of cAMP levels. Decreases the expression of motility genes and induces genes involved in biofilm formation, by controlling the expression of SlrR. Required for formation of intercellular nanotubes that bridge neighboring cells to allow molecular exchange. Plays a key role in directing the early stages of colony development. In vitro, has a metal-dependent phosphodiesterase activity against 2',3'-cAMP and 2',3'-cGMP. Also has 3',5'-cyclic-nucleotide phosphodiesterase activity, but cannot use cyclic di-AMP or cyclic di-GMP, and does not have phosphatase activity. The protein is 2',3'-cyclic-nucleotide 2'-phosphodiesterase (ymdB) of Bacillus subtilis (strain 168).